Reading from the N-terminus, the 197-residue chain is Phosphoheptose isomerase (197 aa).

The 163-residue stretch at 34-196 folds into the SIS domain; sequence MVHCLLGGNK…DRTLFPQDEQ (163 aa). Residue 49 to 51 coordinates substrate; it reads NGG. Zn(2+) is bound by residues His58 and Glu62. Substrate is bound by residues Glu62, 91 to 92, 117 to 119, Ser122, and Gln172; these read ND and STS. Zn(2+) contacts are provided by Gln172 and His180.

Belongs to the SIS family. GmhA subfamily. Homotetramer. Requires Zn(2+) as cofactor.

Its subcellular location is the cytoplasm. It carries out the reaction 2 D-sedoheptulose 7-phosphate = D-glycero-alpha-D-manno-heptose 7-phosphate + D-glycero-beta-D-manno-heptose 7-phosphate. The protein operates within carbohydrate biosynthesis; D-glycero-D-manno-heptose 7-phosphate biosynthesis; D-glycero-alpha-D-manno-heptose 7-phosphate and D-glycero-beta-D-manno-heptose 7-phosphate from sedoheptulose 7-phosphate: step 1/1. Its function is as follows. Catalyzes the isomerization of sedoheptulose 7-phosphate in D-glycero-D-manno-heptose 7-phosphate. The sequence is that of Phosphoheptose isomerase from Shewanella baltica (strain OS223).